Here is a 45-residue protein sequence, read N- to C-terminus: MTQRTLGGTVRKRKRTSGFRARMRTKSGQNVIKARRRKGRARLTV.

Positions 22–45 (RMRTKSGQNVIKARRRKGRARLTV) are disordered. Residues 33–45 (KARRRKGRARLTV) show a composition bias toward basic residues.

The protein belongs to the bacterial ribosomal protein bL34 family.

This chain is Large ribosomal subunit protein bL34, found in Thermosynechococcus vestitus (strain NIES-2133 / IAM M-273 / BP-1).